The following is a 498-amino-acid chain: ATP synthase subunit beta, chloroplastic (498 aa).

172-179 (GGAGVGKT) provides a ligand contact to ATP.

Belongs to the ATPase alpha/beta chains family. As to quaternary structure, F-type ATPases have 2 components, CF(1) - the catalytic core - and CF(0) - the membrane proton channel. CF(1) has five subunits: alpha(3), beta(3), gamma(1), delta(1), epsilon(1). CF(0) has four main subunits: a(1), b(1), b'(1) and c(9-12).

It localises to the plastid. The protein resides in the chloroplast thylakoid membrane. It catalyses the reaction ATP + H2O + 4 H(+)(in) = ADP + phosphate + 5 H(+)(out). Functionally, produces ATP from ADP in the presence of a proton gradient across the membrane. The catalytic sites are hosted primarily by the beta subunits. This chain is ATP synthase subunit beta, chloroplastic, found in Carica papaya (Papaya).